Consider the following 149-residue polypeptide: Oligosaccharyltransferase complex subunit ostc-B (149 aa).

At methionine 1–threonine 32 the chain is on the cytoplasmic side. A helical membrane pass occupies residues valine 33 to isoleucine 53. Topologically, residues valine 54–tyrosine 83 are extracellular. Residues isoleucine 84–leucine 104 form a helical membrane-spanning segment. Over aspartate 105 to arginine 117 the chain is Cytoplasmic. The chain crosses the membrane as a helical span at residues phenylalanine 118–phenylalanine 138. Residues methionine 139–glycine 149 are Extracellular-facing.

This sequence belongs to the OSTC family. Specific component of the STT3A-containing form of the oligosaccharyltransferase (OST) complex.

The protein localises to the membrane. Its pathway is protein modification; protein glycosylation. Functionally, specific component of the STT3A-containing form of the oligosaccharyl transferase (OST) complex that catalyzes the initial transfer of a defined glycan (Glc(3)Man(9)GlcNAc(2) in eukaryotes) from the lipid carrier dolichol-pyrophosphate to an asparagine residue within an Asn-X-Ser/Thr consensus motif in nascent polypeptide chains, the first step in protein N-glycosylation. N-glycosylation occurs cotranslationally and the complex associates with the Sec61 complex at the channel-forming translocon complex that mediates protein translocation across the endoplasmic reticulum (ER). All subunits are required for a maximal enzyme activity. The polypeptide is Oligosaccharyltransferase complex subunit ostc-B (Xenopus laevis (African clawed frog)).